The sequence spans 306 residues: Homoserine kinase (306 aa).

95–105 lines the ATP pocket; it reads PQSRGLGSSAA.

It belongs to the GHMP kinase family. Homoserine kinase subfamily.

The protein localises to the cytoplasm. The catalysed reaction is L-homoserine + ATP = O-phospho-L-homoserine + ADP + H(+). It participates in amino-acid biosynthesis; L-threonine biosynthesis; L-threonine from L-aspartate: step 4/5. In terms of biological role, catalyzes the ATP-dependent phosphorylation of L-homoserine to L-homoserine phosphate. The chain is Homoserine kinase from Corynebacterium urealyticum (strain ATCC 43042 / DSM 7109).